We begin with the raw amino-acid sequence, 316 residues long: Leucine-rich repeat-containing protein 73 (316 aa).

LRR repeat units follow at residues 57 to 78 (SLAQ…KQLA), 86 to 106 (SIQS…ALLN), 114 to 137 (ALVA…CGLL), 145 to 166 (GLKE…SRLA), 174 to 187 (QVRV…PLGD), 202 to 223 (TLEV…TLLD), and 231 to 250 (ALRS…QQQI). Positions 257–296 (GEEEEEVAGGAGDTQEWERGREPAAHQRGSSSWMCPSDPS) are disordered. Positions 272 to 281 (EWERGREPAA) are enriched in basic and acidic residues. Residues 286–296 (SSSWMCPSDPS) are compositionally biased toward low complexity.

The protein is Leucine-rich repeat-containing protein 73 (LRRC73) of Homo sapiens (Human).